Here is an 84-residue protein sequence, read N- to C-terminus: Putative pelota-like protein YCL001W-B (84 aa).

Belongs to the eukaryotic release factor 1 family. Pelota subfamily. Highly divergent.

The sequence is that of Putative pelota-like protein YCL001W-B from Saccharomyces cerevisiae (strain ATCC 204508 / S288c) (Baker's yeast).